A 172-amino-acid polypeptide reads, in one-letter code: Large ribosomal subunit protein uL10 (172 aa).

This sequence belongs to the universal ribosomal protein uL10 family. As to quaternary structure, part of the ribosomal stalk of the 50S ribosomal subunit. The N-terminus interacts with L11 and the large rRNA to form the base of the stalk. The C-terminus forms an elongated spine to which L12 dimers bind in a sequential fashion forming a multimeric L10(L12)X complex.

Functionally, forms part of the ribosomal stalk, playing a central role in the interaction of the ribosome with GTP-bound translation factors. In Parvibaculum lavamentivorans (strain DS-1 / DSM 13023 / NCIMB 13966), this protein is Large ribosomal subunit protein uL10.